A 576-amino-acid chain; its full sequence is DNA primase (576 aa).

The segment at 40 to 64 adopts a CHC2-type zinc-finger fold; it reads CPFHNEKTPSFNVVAKKQFYHCFGC. The 83-residue stretch at 251–333 folds into the Toprim domain; it reads DSIIVVEGYM…GLDAGFIFLP (83 aa). Residues Glu257, Asp301, and Asp303 each coordinate Mg(2+).

Belongs to the DnaG primase family. Monomer. Interacts with DnaB. Zn(2+) is required as a cofactor. The cofactor is Mg(2+).

It carries out the reaction ssDNA + n NTP = ssDNA/pppN(pN)n-1 hybrid + (n-1) diphosphate.. Functionally, RNA polymerase that catalyzes the synthesis of short RNA molecules used as primers for DNA polymerase during DNA replication. The sequence is that of DNA primase from Legionella pneumophila.